The sequence spans 314 residues: MDVGNKSTMSEFVLLGLSNSWELQMFFFMVFSLLYVATMVGNSLIVITVIVDPHLHSPMYFLLTNLSIIDMSLASFATPKMITDYLTGHKTISFDGCLTQIFFLHLFTGTEIILLMAMSFDRYIAICKPLHYASVISPQVCVALVVASWIMGVMHSMSQVIFALTLPFCGPYEVDSFFCDLPVVFQLACVDTYVLGLFMISTSGIIALSCFIVLFNSYVIVLVTVKHHSSRGSSKALSTCTAHFIVVFLFFGPCIFIYMWPLSSFLTDKILSVFYTIFTPTLNPIIYTLRNQEVKIAMRKLKNRFLNFNKAMPS.

Over Met-1 to Met-25 the chain is Extracellular. Residue Asn-5 is glycosylated (N-linked (GlcNAc...) asparagine). The chain crosses the membrane as a helical span at residues Phe-26–Val-49. Residues Ile-50–Ser-57 lie on the Cytoplasmic side of the membrane. The helical transmembrane segment at Pro-58–Pro-79 threads the bilayer. Over Lys-80 to Gln-100 the chain is Extracellular. Cysteines 97 and 189 form a disulfide. A helical transmembrane segment spans residues Ile-101–Phe-120. Over Asp-121–Gln-139 the chain is Cytoplasmic. A helical transmembrane segment spans residues Val-140–Ser-158. Residues Gln-159–Leu-195 lie on the Extracellular side of the membrane. A helical transmembrane segment spans residues Gly-196–Val-219. At Ile-220–Lys-235 the chain is on the cytoplasmic side. The chain crosses the membrane as a helical span at residues Ala-236–Tyr-258. Over Met-259 to Lys-269 the chain is Extracellular. A helical transmembrane segment spans residues Ile-270–Leu-289. At Arg-290–Ser-314 the chain is on the cytoplasmic side.

Belongs to the G-protein coupled receptor 1 family.

It is found in the cell membrane. In terms of biological role, odorant receptor. In Homo sapiens (Human), this protein is Olfactory receptor 4K2 (OR4K2).